The sequence spans 113 residues: Mini zinc finger protein 2 (113 aa).

Residues 24 to 83 form a ZF-HD dimerization-type; degenerate zinc finger; it reads YGECRRNHAASTGGHAVDGCREFIAAEDGGGGNSTSAVGVAAAALKCAACGCHRSFHRRV. Positions 93–113 are disordered; that stretch reads DCASGDTSSSSPSSSSSLSSE. Over residues 100–113 the composition is skewed to low complexity; sequence SSSSPSSSSSLSSE.

As to quaternary structure, homo- and heterodimers.

Its subcellular location is the cytoplasm. In terms of biological role, inhibits zinc finger homeodomain (ZHD) transcription factors, by interacting with them to prevent both their nuclear localization and their DNA-binding properties. This is Mini zinc finger protein 2 (MIF3) from Oryza sativa subsp. japonica (Rice).